The chain runs to 479 residues: D-alanyl-D-alanine carboxypeptidase DacB (479 aa).

The first 26 residues, 1-26, serve as a signal peptide directing secretion; the sequence is MKKLSSISTALGSFLLSVSFSLPTFA. Ser-69 functions as the Acyl-ester intermediate in the catalytic mechanism. Lys-72 acts as the Proton acceptor in catalysis. Ser-310 is a catalytic residue. Position 420 (Lys-420) interacts with substrate.

It belongs to the peptidase S13 family.

It localises to the periplasm. The enzyme catalyses Preferential cleavage: (Ac)2-L-Lys-D-Ala-|-D-Ala. Also transpeptidation of peptidyl-alanyl moieties that are N-acyl substituents of D-alanine.. Its pathway is cell wall biogenesis; peptidoglycan biosynthesis. In terms of biological role, not involved in transpeptidation but exclusively catalyzes a DD-carboxypeptidase and DD-endopeptidase reaction. This is D-alanyl-D-alanine carboxypeptidase DacB (dacB) from Haemophilus influenzae (strain ATCC 51907 / DSM 11121 / KW20 / Rd).